The primary structure comprises 218 residues: Large ribosomal subunit protein uL3 (218 aa).

Residues 137–157 (GVGASHGAHKNHRKPGSIGGA) are disordered.

This sequence belongs to the universal ribosomal protein uL3 family. As to quaternary structure, part of the 50S ribosomal subunit. Forms a cluster with proteins L14 and L19.

In terms of biological role, one of the primary rRNA binding proteins, it binds directly near the 3'-end of the 23S rRNA, where it nucleates assembly of the 50S subunit. In Kocuria rhizophila (strain ATCC 9341 / DSM 348 / NBRC 103217 / DC2201), this protein is Large ribosomal subunit protein uL3.